The chain runs to 1107 residues: RNA-dependent RNA polymerase 1 (1107 aa).

It belongs to the RdRP family.

The catalysed reaction is RNA(n) + a ribonucleoside 5'-triphosphate = RNA(n+1) + diphosphate. Functionally, RNA-dependent direct polymerase involved in antiviral silencing. Required for the production of some small RNAs (mainly 21 and some 22 nucleotides) derived from the crucifer-infecting tobamovirus (TMV-cg). Required for turnip mosaic virus (TuMV) silencing and accumulation of viral siRNAs. Involved in cucumber mosaic virus (CMV) silencing. Required for the biogenesis of viral secondary siRNAs, process that follows the production of primary siRNAs derived from viral RNA replication. Specifically targets the positive-strand of the 3 RNA genomes of CMV and preferentially amplifies the 5'-terminal siRNAs of each viral genomic RNA. Not involved in the production of siRNAs derived from a single-stranded 336-nucleotide satellite RNA of CMV. The protein is RNA-dependent RNA polymerase 1 (RDR1) of Arabidopsis thaliana (Mouse-ear cress).